A 121-amino-acid polypeptide reads, in one-letter code: MARIAGVDLPKKKRIEYGLTYIYGIGLFTSRKILDKVGISYNKRVHELSEDEAAAIRKEIQENYMVEGDLRKQVAMDIKALMDLGSFRGLRHRKGLPVRGQKTKTNARTRKGKRKTVGAKS.

The interval 95 to 121 (GLPVRGQKTKTNARTRKGKRKTVGAKS) is disordered.

This sequence belongs to the universal ribosomal protein uS13 family. Part of the 30S ribosomal subunit. Forms a loose heterodimer with protein S19. Forms two bridges to the 50S subunit in the 70S ribosome.

Functionally, located at the top of the head of the 30S subunit, it contacts several helices of the 16S rRNA. In the 70S ribosome it contacts the 23S rRNA (bridge B1a) and protein L5 of the 50S subunit (bridge B1b), connecting the 2 subunits; these bridges are implicated in subunit movement. Contacts the tRNAs in the A and P-sites. The polypeptide is Small ribosomal subunit protein uS13 (Campylobacter jejuni subsp. jejuni serotype O:23/36 (strain 81-176)).